The following is a 418-amino-acid chain: Tyrosine--tRNA ligase (418 aa).

A 'HIGH' region motif is present at residues proline 42 to histidine 51. The 'KMSKS' region motif lies at lysine 226 to serine 230. Lysine 229 provides a ligand contact to ATP. An S4 RNA-binding domain is found at valine 339–leucine 400.

This sequence belongs to the class-I aminoacyl-tRNA synthetase family. TyrS type 2 subfamily. Homodimer.

It is found in the cytoplasm. The enzyme catalyses tRNA(Tyr) + L-tyrosine + ATP = L-tyrosyl-tRNA(Tyr) + AMP + diphosphate + H(+). Functionally, catalyzes the attachment of tyrosine to tRNA(Tyr) in a two-step reaction: tyrosine is first activated by ATP to form Tyr-AMP and then transferred to the acceptor end of tRNA(Tyr). The polypeptide is Tyrosine--tRNA ligase (Xylella fastidiosa (strain 9a5c)).